The primary structure comprises 463 residues: GTPase Der (463 aa).

EngA-type G domains are found at residues lysine 2–lysine 164 and isoleucine 198–threonine 369. GTP-binding positions include glycine 8–serine 15, aspartate 55–leucine 59, asparagine 116–aspartate 119, glycine 204–serine 211, aspartate 251–isoleucine 255, and asparagine 315–aspartate 318. The 85-residue stretch at glutamine 370–serine 454 folds into the KH-like domain.

It belongs to the TRAFAC class TrmE-Era-EngA-EngB-Septin-like GTPase superfamily. EngA (Der) GTPase family. In terms of assembly, associates with the 50S ribosomal subunit.

Its function is as follows. GTPase that plays an essential role in the late steps of ribosome biogenesis. The chain is GTPase Der from Campylobacter fetus subsp. fetus (strain 82-40).